A 480-amino-acid polypeptide reads, in one-letter code: Cyclin L homolog cyl-1 (480 aa).

A disordered region spans residues 25–58 (PKEQNGNVEPKKEEDEKFESTYKQNENTQITPSS). Residues 33–44 (EPKKEEDEKFES) are compositionally biased toward basic and acidic residues. Residues 45-58 (TYKQNENTQITPSS) show a composition bias toward polar residues. The Cyclin N-terminal domain maps to 91–230 (PSLVDGLSKE…RRILATLGFV (140 aa)). The disordered stretch occupies residues 368–480 (KMAPDGEKST…ESSTPPRSRR (113 aa)). Composition is skewed to basic and acidic residues over residues 384–409 (KDSR…GKKE) and 418–442 (NDRD…DEKK). Positions 443–453 (DRRKRTRSRSR) are enriched in basic residues. Residues 454–472 (DRKDKNRNRDVGKRYRKES) show a composition bias toward basic and acidic residues.

Belongs to the cyclin family.

Functionally, involved in pre-mRNA splicing. Functions in association with cyclin-dependent kinases (CDKs). Involved in induction of expression of heat shock protein hsp-16.2 in response to heat shock. Plays a role in male tail development, perhaps acting together with cell cycle regulators cdc-25.2, cdk-1, cyb-3, and cyd-1. This chain is Cyclin L homolog cyl-1, found in Caenorhabditis elegans.